Here is a 489-residue protein sequence, read N- to C-terminus: MALTKPDVDVLVVGGGLGGLSTALFLARRGARVLLVERHASTSVLPKAAGQNPRTMELFRFGGVADEILATDDIRGAQGDFTIKVVERVGGRVLHSFAESFEELVGATEQCTPMPWALAPQDRVEPVLVAHAAKHGAEIRFATELTSFQAGDDGVTARLRDLGTGAESTVSARYLVAADGPRSAIRESLGITRHGHGTLAHFMGVIFEADLTAVVPPGSTGWYYLQHPDFTGTFGPTDRPNRHTFYVATTPERGERPEDYTPQRCTELIRLAVDAPGLVPDILDIQAWDMAAYIADRWREGPVLLVGDAAKVTPPTGGMGGNTAIGDGFDVAWKLAAVLRGEAGERLLDSYGAERSLVSRLVVDESLAIYAQRMAPHLLGSVPEERGTAQVVLGFRYRSTAVAAEDDDPEPTEDPRRPSGRPGFRAPHVWIEQDGTRRSTVELFGDCWVLLAAPEGGAWPGRPPAPPRIWASASTSISSAAMSPPPPAN.

Residues leucine 17–glycine 18, glutamate 37, glutamine 121, and leucine 145 contribute to the FAD site. The active-site Proton acceptor is the tyrosine 224. Aspartate 308 is an FAD binding site. Glycine 317 contributes to the aklavinone binding site. Disordered regions lie at residues valine 402–histidine 428 and glutamate 455–asparagine 489. The segment covering arginine 468–methionine 482 has biased composition (low complexity).

The protein belongs to the PheA/TfdB FAD monooxygenase family. In terms of assembly, monomer. FAD is required as a cofactor.

It catalyses the reaction aklavinone + NADPH + O2 + H(+) = epsilon-rhodomycinone + NADP(+) + H2O. It functions in the pathway antibiotic biosynthesis; daunorubicin biosynthesis. Its pathway is antibiotic biosynthesis; carminomycin biosynthesis. The protein operates within antibiotic biosynthesis; rhodomycin biosynthesis. Its function is as follows. Involved in the biosynthesis of the anthracyclines carminomycin, rhodomycin and daunorubicin (daunomycin) which are aromatic polyketide antibiotics that exhibit high cytotoxicity and are widely applied in the chemotherapy of a variety of cancers. Catalyzes the incorporation of a hydroxyl group at position C-11 of aklavinone, resulting in epsilon-rhodomycinone. It cannot accept substrates glycosylated at position C-7. It can also hydroxylate 11-deoxycarminomycinone and can use both NAD or NADP. The chain is Aklavinone 12-hydroxylase DnrF (dnrF) from Streptomyces peucetius.